We begin with the raw amino-acid sequence, 585 residues long: Aspartate--tRNA ligase (585 aa).

Glu-173 contacts L-aspartate. The interval 197–200 (QTLK) is aspartate. Position 219 (Arg-219) interacts with L-aspartate. Residues 219 to 221 (RDE) and Gln-228 contribute to the ATP site. An L-aspartate-binding site is contributed by His-446. ATP is bound at residue Glu-480. Arg-487 is an L-aspartate binding site. 532–535 (GLDR) contributes to the ATP binding site.

It belongs to the class-II aminoacyl-tRNA synthetase family. Type 1 subfamily. Homodimer.

The protein resides in the cytoplasm. The catalysed reaction is tRNA(Asp) + L-aspartate + ATP = L-aspartyl-tRNA(Asp) + AMP + diphosphate. Catalyzes the attachment of L-aspartate to tRNA(Asp) in a two-step reaction: L-aspartate is first activated by ATP to form Asp-AMP and then transferred to the acceptor end of tRNA(Asp). The sequence is that of Aspartate--tRNA ligase from Parabacteroides distasonis (strain ATCC 8503 / DSM 20701 / CIP 104284 / JCM 5825 / NCTC 11152).